The following is a 432-amino-acid chain: GTPase Obg (432 aa).

The Obg domain occupies 1-159; that stretch reads MKFIDTAKFT…YEVKAELKVL (159 aa). The 173-residue stretch at 160 to 332 folds into the OBG-type G domain; the sequence is ADVGFVGLPN…LLLKIAKELE (173 aa). GTP contacts are provided by residues 166 to 173, 191 to 195, 213 to 216, 284 to 287, and 313 to 315; these read GLPNAGKS, FTTLN, DLPG, NKMD, and SGL. Mg(2+)-binding residues include serine 173 and threonine 193. The OCT domain occupies 354–432; it reads RLEEDEEDIQ…VFEYELEWMD (79 aa).

This sequence belongs to the TRAFAC class OBG-HflX-like GTPase superfamily. OBG GTPase family. In terms of assembly, monomer. Mg(2+) is required as a cofactor.

The protein localises to the cytoplasm. An essential GTPase which binds GTP, GDP and possibly (p)ppGpp with moderate affinity, with high nucleotide exchange rates and a fairly low GTP hydrolysis rate. Plays a role in control of the cell cycle, stress response, ribosome biogenesis and in those bacteria that undergo differentiation, in morphogenesis control. This chain is GTPase Obg, found in Mesoplasma florum (strain ATCC 33453 / NBRC 100688 / NCTC 11704 / L1) (Acholeplasma florum).